We begin with the raw amino-acid sequence, 474 residues long: SHC-transforming protein 3 (474 aa).

The disordered stretch occupies residues 1 to 27 (MSATRKSRAGDEPLPRPPRGAPHTSDQ). A PID domain is found at 29-214 (LGPGVTYVVK…LDEPWTEEEG (186 aa)). The CH1 stretch occupies residues 215–378 (DGPDHPYYNS…RMLEELNAEP (164 aa)). Residue serine 282 is modified to Phosphoserine. Residues 308 to 328 (QPVPPQVWPAATSSTESSPRK) are disordered. The SH2 domain occupies 379–470 (WYQGEMSRKE…GSELCLQQPV (92 aa)).

Interacts with the Trk receptors in a phosphotyrosine-dependent manner. Once activated, binds to GRB2. Interacts with activated EGF receptors. In terms of processing, tyrosine phosphorylated. As to expression, predominantly expressed in the adult brain.

Signaling adapter that couples activated growth factor receptors to signaling pathway in neurons. Involved in the signal transduction pathways of neurotrophin-activated Trk receptors in cortical neurons. This is SHC-transforming protein 3 (Shc3) from Mus musculus (Mouse).